Reading from the N-terminus, the 528-residue chain is Ladinin-1 (528 aa).

Residues 1–404 are disordered; sequence MSVSRKDWSA…NSETPLTRSA (404 aa). Residues Ser-38, Ser-56, Ser-62, Ser-72, and Ser-76 each carry the phosphoserine modification. The span at 88–97 shows a compositional bias: basic residues; the sequence is RTRKERRQRR. Residue Ser-119 is modified to Phosphoserine. Residues 134–173 show a composition bias toward basic and acidic residues; the sequence is KKVEALPRRRLSREQRGPWAQDEERLKNRELAEGEKRLPE. SEK repeat units follow at residues 184-186, 190-192, 202-204, and 208-210; these read SEK. The 6 X SEK repeats stretch occupies residues 184–281; the sequence is SEKTPVSEKT…MQERKLVSEK (98 aa). Composition is skewed to basic and acidic residues over residues 218-231 and 267-279; these read SLTEKRHSPEKLVP and IVSEKMQERKLVS. 2 SEK repeats span residues 269–271 and 279–281; these read SEK. Over residues 304 to 316 the composition is skewed to polar residues; it reads EQPQTTGGSQATT. Residues Ser-328, Ser-358, Ser-367, Ser-405, and Ser-496 each carry the phosphoserine modification. The segment covering 365 to 377 has biased composition (low complexity); that stretch reads TPSPTLLTYSSSL. The disordered stretch occupies residues 492–528; that stretch reads KTQDSGDHGSQEVRKEASVTKRAQWGSKPSTSLDAEV. A compositionally biased stretch (basic and acidic residues) spans 495–510; sequence DSGDHGSQEVRKEASV. A compositionally biased stretch (polar residues) spans 518-528; the sequence is SKPSTSLDAEV.

Expressed in kidney, lung and keratinocytes followed by liver, spleen and brain. Not expressed in testis, skeletal and heart muscle and in fibroblasts.

The protein localises to the secreted. It is found in the extracellular space. It localises to the extracellular matrix. Its subcellular location is the basement membrane. In terms of biological role, anchoring filament protein which is a component of the basement membrane zone. The sequence is that of Ladinin-1 (Lad1) from Mus musculus (Mouse).